Here is a 403-residue protein sequence, read N- to C-terminus: GPI-N-acetylgalactosamine transferase PGAP4 (403 aa).

Residues 1-22 (MSTSTSPAAMLLRRLRRLSWGS) lie on the Cytoplasmic side of the membrane. A helical transmembrane segment spans residues 23-43 (TAVQLFILTVVTFGLLAPLAC). The Lumenal portion of the chain corresponds to 44-259 (HRLLHSYFYL…RLQHYINPEP (216 aa)). N87 is a glycosylation site (N-linked (GalNAc...) asparagine). V109 contacts UDP-N-acetyl-alpha-D-galactosamine. Intrachain disulfides connect C132–C136 and C144–C194. The DXD motif motif lies at 211–213 (EDD). Residues 260 to 280 (MRILEWVGVGMLLGPLLTWIY) form a helical membrane-spanning segment. At 281–287 (MRFASRP) the chain is on the cytoplasmic side. Residues 288-308 (GFSWPVMLFFSLYSMGLVELV) traverse the membrane as a helical segment. Residues 309–403 (GRHYFLELRR…LRYNFHPSLL (95 aa)) lie on the Lumenal side of the membrane. C332 and C333 form a disulfide bridge. UDP-N-acetyl-alpha-D-galactosamine-binding residues include T334, P335, and K362.

The protein belongs to the PGAP4 family. Glycosylated.

The protein localises to the golgi apparatus membrane. Functionally, golgi-resident glycosylphosphatidylinositol (GPI)-N-acetylgalactosamine transferase that catalyzes the N-acetyl-beta-D-galactosamine transfer from an UDP-N-acetyl-alpha-D-galactosamine to the 4-OH-position of the first mannose of the glycosylphosphatidylinositol (GPI) of a GPI-anchored protein (GPI-AP). This modification occurs after the fatty acid remodeling step of the GPI-anchor maturation. The protein is GPI-N-acetylgalactosamine transferase PGAP4 of Homo sapiens (Human).